Consider the following 258-residue polypeptide: Trans-aconitate 2-methyltransferase (258 aa).

It belongs to the methyltransferase superfamily. Tam family.

It is found in the cytoplasm. The enzyme catalyses trans-aconitate + S-adenosyl-L-methionine = (E)-3-(methoxycarbonyl)pent-2-enedioate + S-adenosyl-L-homocysteine. In terms of biological role, catalyzes the S-adenosylmethionine monomethyl esterification of trans-aconitate. The chain is Trans-aconitate 2-methyltransferase from Yersinia pestis bv. Antiqua (strain Antiqua).